The following is a 308-amino-acid chain: HTH-type transcriptional activator AllS (308 aa).

An HTH lysR-type domain is found at 2 to 59 (FDPETLRTFIAVAETGSFSKAAERLCKTTATISYRIKLLEENTGVALFFRTTRSVTLT). The segment at residues 19–38 (FSKAAERLCKTTATISYRIK) is a DNA-binding region (H-T-H motif).

Belongs to the LysR transcriptional regulatory family.

Functionally, positive regulator essential for the expression of allD operon. Binds to the allD promoter. The sequence is that of HTH-type transcriptional activator AllS (allS) from Escherichia coli O1:K1 / APEC.